Reading from the N-terminus, the 408-residue chain is Glutamate N-acetyltransferase (408 aa).

Residues Thr150, Lys176, Thr189, Glu271, Asn403, and Thr408 each contribute to the substrate site. Residue Thr189 is the Nucleophile of the active site.

Belongs to the ArgJ family. As to quaternary structure, heterotetramer of two alpha and two beta chains.

It is found in the cytoplasm. It catalyses the reaction N(2)-acetyl-L-ornithine + L-glutamate = N-acetyl-L-glutamate + L-ornithine. It functions in the pathway amino-acid biosynthesis; L-arginine biosynthesis; L-ornithine and N-acetyl-L-glutamate from L-glutamate and N(2)-acetyl-L-ornithine (cyclic): step 1/1. Functionally, catalyzes the transfer of the acetyl group from N(2)-acetylornithine to glutamate, forming N-acetylglutamate and L-ornithine. The sequence is that of Glutamate N-acetyltransferase from Methanococcus maripaludis (strain DSM 14266 / JCM 13030 / NBRC 101832 / S2 / LL).